Consider the following 132-residue polypeptide: Peptide methionine sulfoxide reductase MsrB (132 aa).

Positions 9-131 (DAQWRAELSP…NSASLSFHPK (123 aa)) constitute a MsrB domain. Zn(2+)-binding residues include Cys-48, Cys-51, Cys-97, and Cys-100. The active-site Nucleophile is Cys-120.

This sequence belongs to the MsrB Met sulfoxide reductase family. It depends on Zn(2+) as a cofactor.

The enzyme catalyses L-methionyl-[protein] + [thioredoxin]-disulfide + H2O = L-methionyl-(R)-S-oxide-[protein] + [thioredoxin]-dithiol. The chain is Peptide methionine sulfoxide reductase MsrB from Thiobacillus denitrificans (strain ATCC 25259 / T1).